The following is a 148-amino-acid chain: Large ribosomal subunit protein bL9 (148 aa).

It belongs to the bacterial ribosomal protein bL9 family.

In terms of biological role, binds to the 23S rRNA. This Azotobacter vinelandii (strain DJ / ATCC BAA-1303) protein is Large ribosomal subunit protein bL9.